Reading from the N-terminus, the 580-residue chain is DBIRD complex subunit ZNF326 (580 aa).

The interval 1-124 (MDFEDDYVHS…YRNSLDSFGG (124 aa)) is mediates transcriptional activation. Ser48, Ser56, Ser63, Ser69, Ser81, Ser82, Ser91, Ser106, Ser114, Ser118, Ser121, and Ser137 each carry phosphoserine. A Glycyl lysine isopeptide (Lys-Gly) (interchain with G-Cter in SUMO2) cross-link involves residue Lys140. The interval 156–196 (SYSSFSSPHMKPAPVGSRGRGTPAYPESTFGSRSYDAFGGP) is disordered. Arg173 carries the post-translational modification Omega-N-methylarginine. Residue Ser212 is modified to Phosphoserine. An Omega-N-methylarginine modification is found at Arg235. The Bipartite nuclear localization signal motif lies at 238 to 260 (KRKMMQIFIKPGGAFIKKPKLAK). Lys240 participates in a covalent cross-link: Glycyl lysine isopeptide (Lys-Gly) (interchain with G-Cter in SUMO2). Lys247 is modified (N6-acetyllysine; alternate). Lys247 participates in a covalent cross-link: Glycyl lysine isopeptide (Lys-Gly) (interchain with G-Cter in SUMO2); alternate. Residues Lys254 and Lys264 each participate in a glycyl lysine isopeptide (Lys-Gly) (interchain with G-Cter in SUMO2) cross-link. Residues 256–302 (PKLAKPMDKMNLSKSPTKTDPKNEEEEKRRIEARREKQRRRREKNSE) form a disordered region. Ser270 carries the phosphoserine modification. The segment covering 272-290 (TKTDPKNEEEEKRRIEARR) has biased composition (basic and acidic residues). The segment at 314-336 (CSFCKFRTFEEKDIELHLESSSH) adopts a C2H2 AKAP95-type 1 zinc-finger fold. Residue Lys401 forms a Glycyl lysine isopeptide (Lys-Gly) (interchain with G-Cter in SUMO2) linkage. The segment at 407–430 (CSACSVYIPALHSSVQLHLKSPDH) adopts a C2H2 AKAP95-type 2 zinc-finger fold. Glycyl lysine isopeptide (Lys-Gly) (interchain with G-Cter in SUMO2) cross-links involve residues Lys459 and Lys467. Residues 470–580 (NPFEIQDHPQ…ATEQCEHRQM (111 aa)) are disordered. A compositionally biased stretch (acidic residues) spans 483 to 529 (IEGDEEDEEKIDEPIEEEEEEEEEEEEEGEEAGSVEEEGDVEGEEGT). Over residues 530 to 539 (AEAAAAGEAD) the composition is skewed to low complexity. The segment covering 540–562 (AVGEAEGAGEAEEAEEEEEEEGT) has biased composition (acidic residues).

It belongs to the AKAP95 family. Component of the DBIRD complex. Interacts with CCAR2; the interaction is direct. In terms of tissue distribution, ubiquitously expressed in adult tissues. Highly expressed in neuronal tissues such as brain and neural tube.

It is found in the nucleus matrix. In terms of biological role, core component of the DBIRD complex, a multiprotein complex that acts at the interface between core mRNP particles and RNA polymerase II (RNAPII) and integrates transcript elongation with the regulation of alternative splicing: the DBIRD complex affects local transcript elongation rates and alternative splicing of a large set of exons embedded in (A + T)-rich DNA regions. May also play a role in neuronal differentiation. Able to bind DNA and activate expression in vitro. The sequence is that of DBIRD complex subunit ZNF326 (Znf326) from Mus musculus (Mouse).